Consider the following 150-residue polypeptide: Interferon antagonist OPG027 (150 aa).

The protein belongs to the orthopoxvirus OPG027 family.

In terms of biological role, inhibits antiviral activity induced by type I interferons. Does not block signal transduction of IFN, but is important to counteract the host antiviral state induced by a pre-treatment with IFN. In Homo sapiens (Human), this protein is Interferon antagonist OPG027 (OPG027).